The primary structure comprises 81 residues: Ferredoxin (81 aa).

The 4Fe-4S ferredoxin-type domain occupies 2-30; the sequence is KYTIVDKETCIACGACGAAAPDIYDYDED. 4 residues coordinate [4Fe-4S] cluster: cysteine 11, cysteine 14, cysteine 17, and cysteine 61.

[4Fe-4S] cluster serves as cofactor.

Ferredoxins are iron-sulfur proteins that transfer electrons in a wide variety of metabolic reactions. In Bacillus thermoproteolyticus, this protein is Ferredoxin.